Here is a 129-residue protein sequence, read N- to C-terminus: M-zodatoxin-Lt8k (129 aa).

An N-terminal signal peptide occupies residues 1–20 (MKYFVVALALVAAFACIAES). A propeptide spanning residues 21 to 60 (KPAESEHELAEVEEENELADLEDAVWLEHLADLSDLEEAR) is cleaved from the precursor.

Belongs to the cationic peptide 06 (cytoinsectotoxin) family. As to expression, expressed by the venom gland.

Its subcellular location is the secreted. Its function is as follows. Insecticidal, cytolytic and antimicrobial peptide. Forms voltage-dependent, ion-permeable channels in membranes. At high concentration causes cell membrane lysis. The sequence is that of M-zodatoxin-Lt8k (cit 1-10) from Lachesana tarabaevi (Spider).